The primary structure comprises 213 residues: rRNA N(6)-adenosine-methyltransferase Mettl5 (213 aa).

S-adenosyl-L-methionine-binding positions include Gln-28, Thr-31, Gly-59, Cys-62, and 108-109 (DV).

It belongs to the methyltransferase superfamily. PrmA family. In terms of assembly, heterodimer; heterodimerizes with Trmt112. As to expression, enriched in the brain.

Its subcellular location is the cytoplasm. It carries out the reaction adenosine in rRNA + S-adenosyl-L-methionine = N(6)-methyladenosine in rRNA + S-adenosyl-L-homocysteine + H(+). Functionally, catalytic subunit of a heterodimer with Trmt112, which specifically methylates the 6th position of adenine in 18S rRNA. In Drosophila melanogaster (Fruit fly), this protein is rRNA N(6)-adenosine-methyltransferase Mettl5.